Consider the following 505-residue polypeptide: MALWRPGDGKVYLPPTPVSKVISTDRYVQRTNLFYYGGSSRLLTVGHPYCSLQLDGLQGKKNTIPKVSGYQYRVFRVQLPDPNKFALPDGTLYNPDTERMVWACRGIEVGRGQPLGVGTSGHPLYNRLDDTENTTLLVAESSDSRDNVSVDYKQTQLLIVGCKPPIGEHWTKGTACANPAPRPTDCPPLEFTNTTIQDGDMVETGYGAIDFAALQENKSEVPLDICTTICKYPDYLQMAAEPYGDCMFFCLRREQMFARHFFNRQGVMGEALPDSYYLKGANDKAAPGSYIYSPTPSGSMVSSDSQLFNKPYWLQRAQGHNNGICWFNELFVTVVDTTRSTNLTICTATSPPVSEYKATSFREYLRHTEEFDLQFIFQLCKIHLTPEIMAYLHNMNKALLDDWNFGVVPPPSTSLEDTYRFLQSRAITCQKGAAAPPPKEDRYAKLSFWTVDLRDKFSTDLDQFPLGRKFLLQAGPRSVSVSRKRAAPSSTPTSSPATKRKKRKQ.

A disordered region spans residues 476–505 (PRSVSVSRKRAAPSSTPTSSPATKRKKRKQ). A compositionally biased stretch (low complexity) spans 487 to 497 (APSSTPTSSPA).

Belongs to the papillomaviridae L1 protein family. In terms of assembly, self-assembles into homopentamers. The capsid has an icosahedral symmetry and consists of 72 capsomers, with each capsomer being a pentamer of L1. Interacts with the minor capsid protein L2; this interaction is necessary for viral genome encapsidation. Interacts with protein E2; this interaction enhances E2-dependent replication and transcription activation.

Its subcellular location is the virion. The protein resides in the host nucleus. In terms of biological role, forms an icosahedral capsid with a T=7 symmetry and a 50 nm diameter. The capsid is composed of 72 pentamers linked to each other by disulfide bonds and associated with L2 proteins. Binds to heparan sulfate proteoglycans on cell surface of basal layer keratinocytes to provide initial virion attachment. This binding mediates a conformational change in the virus capsid that facilitates efficient infection. The virion enters the host cell via endocytosis. During virus trafficking, L1 protein dissociates from the viral DNA and the genomic DNA is released to the host nucleus. The virion assembly takes place within the cell nucleus. Encapsulates the genomic DNA together with protein L2. The chain is Major capsid protein L1 from Human papillomavirus type 61.